Consider the following 154-residue polypeptide: Myoglobin (154 aa).

Residues 2–148 enclose the Globin domain; it reads GLSDGEWQIV…FRNDIAAKYK (147 aa). Residue Ser-4 is modified to Phosphoserine. His-65 is a nitrite binding site. An O2-binding site is contributed by His-65. Residue Thr-68 is modified to Phosphothreonine. Residue His-94 coordinates heme b.

The protein belongs to the globin family. In terms of assembly, monomeric.

It is found in the cytoplasm. The protein resides in the sarcoplasm. The enzyme catalyses Fe(III)-heme b-[protein] + nitric oxide + H2O = Fe(II)-heme b-[protein] + nitrite + 2 H(+). It carries out the reaction H2O2 + AH2 = A + 2 H2O. Functionally, monomeric heme protein which primary function is to store oxygen and facilitate its diffusion within muscle tissues. Reversibly binds oxygen through a pentacoordinated heme iron and enables its timely and efficient release as needed during periods of heightened demand. Depending on the oxidative conditions of tissues and cells, and in addition to its ability to bind oxygen, it also has a nitrite reductase activity whereby it regulates the production of bioactive nitric oxide. Under stress conditions, like hypoxia and anoxia, it also protects cells against reactive oxygen species thanks to its pseudoperoxidase activity. The protein is Myoglobin (MB) of Canis lupus familiaris (Dog).